A 175-amino-acid polypeptide reads, in one-letter code: Probable DNA replication complex GINS protein PSF2 (175 aa).

Belongs to the GINS2/PSF2 family. In terms of assembly, component of the GINS complex which is a heterotetramer of SLD5, PSF1, PSF2 and PSF3.

It is found in the nucleus. Its function is as follows. The GINS complex plays an essential role in the initiation of DNA replication. The protein is Probable DNA replication complex GINS protein PSF2 of Encephalitozoon cuniculi (strain GB-M1) (Microsporidian parasite).